An 865-amino-acid polypeptide reads, in one-letter code: Protein translocase subunit SecA (865 aa).

ATP is bound by residues Gln93, 111 to 115, and Asp501; that span reads GEGKT. 4 residues coordinate Zn(2+): Cys841, Cys843, Cys852, and Cys853.

Belongs to the SecA family. As to quaternary structure, monomer and homodimer. Part of the essential Sec protein translocation apparatus which comprises SecA, SecYEG and auxiliary proteins SecDF-YajC and YidC. The cofactor is Zn(2+).

The protein resides in the cell inner membrane. Its subcellular location is the cytoplasm. The enzyme catalyses ATP + H2O + cellular proteinSide 1 = ADP + phosphate + cellular proteinSide 2.. In terms of biological role, part of the Sec protein translocase complex. Interacts with the SecYEG preprotein conducting channel. Has a central role in coupling the hydrolysis of ATP to the transfer of proteins into and across the cell membrane, serving as an ATP-driven molecular motor driving the stepwise translocation of polypeptide chains across the membrane. In Helicobacter pylori (strain ATCC 700392 / 26695) (Campylobacter pylori), this protein is Protein translocase subunit SecA.